Reading from the N-terminus, the 423-residue chain is Serine--tRNA ligase (423 aa).

L-serine is bound at residue Thr231–Glu233. Arg262 to Glu264 lines the ATP pocket. Glu285 is an L-serine binding site. Glu349–Ser352 serves as a coordination point for ATP. Ser384 is a binding site for L-serine.

Belongs to the class-II aminoacyl-tRNA synthetase family. Type-1 seryl-tRNA synthetase subfamily. As to quaternary structure, homodimer. The tRNA molecule binds across the dimer.

Its subcellular location is the cytoplasm. The enzyme catalyses tRNA(Ser) + L-serine + ATP = L-seryl-tRNA(Ser) + AMP + diphosphate + H(+). It catalyses the reaction tRNA(Sec) + L-serine + ATP = L-seryl-tRNA(Sec) + AMP + diphosphate + H(+). The protein operates within aminoacyl-tRNA biosynthesis; selenocysteinyl-tRNA(Sec) biosynthesis; L-seryl-tRNA(Sec) from L-serine and tRNA(Sec): step 1/1. Catalyzes the attachment of serine to tRNA(Ser). Is also able to aminoacylate tRNA(Sec) with serine, to form the misacylated tRNA L-seryl-tRNA(Sec), which will be further converted into selenocysteinyl-tRNA(Sec). The chain is Serine--tRNA ligase from Lactococcus lactis subsp. lactis (strain IL1403) (Streptococcus lactis).